The sequence spans 807 residues: Serine/threonine-protein kinase B-raf (807 aa).

Composition is skewed to low complexity over residues 1–15 and 110–128; these read MAALSSGSSAEGASL and SVSSSASTDTVASSSSSSL. Disordered stretches follow at residues 1–36 and 104–128; these read MAALSSGSSAEGASLFNGDMEPEPPPPVLGACYAGS and GNGTDFSVSSSASTDTVASSSSSSL. The 73-residue stretch at 155–227 folds into the RBD domain; it reads PIVRVFLPNK…TGEELHVEVL (73 aa). The Phorbol-ester/DAG-type zinc-finger motif lies at 234–280; it reads THNFVRKTFFTLAFCDFCRKLLFQGFRCQTCGYKFHQRCSTEVPLMC. The Zn(2+) site is built by H235, C248, C251, C261, C264, H269, C272, and C280. The segment covering 303 to 313 has biased composition (polar residues); sequence EETTLGETTPA. Disordered regions lie at residues 303–372 and 434–494; these read EETT…VHIN and STAG…EIPD. Low complexity predominate over residues 314-328; sequence SGSYPSVPPSDSVGP. Composition is skewed to basic and acidic residues over residues 348–363 and 463–487; these read PADEDHRNQFGQRDRS and QRERKSSSSSEDRNRMKTLGRRDSS. The region spanning 497 to 757 is the Protein kinase domain; it reads ITVGQRIGSG…PQILASIELL (261 aa). Residues 503 to 511 and K523 contribute to the ATP site; that span reads IGSGSFGTV. D616 serves as the catalytic Proton acceptor. S790 carries the phosphoserine; by MAPK1 modification. Residue T793 is modified to Phosphothreonine; by MAPK1.

The protein belongs to the protein kinase superfamily. TKL Ser/Thr protein kinase family. RAF subfamily. Zn(2+) is required as a cofactor. In terms of processing, phosphorylated. As to expression, expressed preferentially in neural tissue.

It localises to the nucleus. It is found in the cytoplasm. Its subcellular location is the cell membrane. The enzyme catalyses L-seryl-[protein] + ATP = O-phospho-L-seryl-[protein] + ADP + H(+). It catalyses the reaction L-threonyl-[protein] + ATP = O-phospho-L-threonyl-[protein] + ADP + H(+). With respect to regulation, in quiescent cells, maintained in an inactive state via an intramolecular interaction between the protein kinase and N-terminal domains. Following mitogen-mediated cell activation, binds via its RGB domain to active HRAS (GTP-bound) which releases the inhibitory intramolecular interaction between the two domains. This allows the MAP2K1-mediated dimerization of KSR1 or KSR2, and BRAF which activates BRAF. Protein kinase involved in the activation of the MAP signaling cascade. May play a role in transducing specific signals in neural cells. The polypeptide is Serine/threonine-protein kinase B-raf (Coturnix japonica (Japanese quail)).